Here is a 419-residue protein sequence, read N- to C-terminus: Serine/threonine-protein kinase Kist (419 aa).

Positions 23-304 (WQVQSRLGSG…AEMALCSPFF (282 aa)) constitute a Protein kinase domain. ATP is bound by residues 29 to 37 (LGSGSSASV) and Lys-54. Catalysis depends on proton acceptor residues Asp-141 and Asp-158. The 83-residue stretch at 324–406 (RLLNVLDDDY…KFVVATFYPL (83 aa)) folds into the RRM domain.

This sequence belongs to the protein kinase superfamily. Ser/Thr protein kinase family. Interacts with stathmin, PAM and CDKN1B/p27Kip1.

Its subcellular location is the nucleus. It carries out the reaction L-seryl-[protein] + ATP = O-phospho-L-seryl-[protein] + ADP + H(+). The catalysed reaction is L-threonyl-[protein] + ATP = O-phospho-L-threonyl-[protein] + ADP + H(+). In terms of biological role, upon serum stimulation, phosphorylates CDKN1B/p27Kip1, thus controlling CDKN1B subcellular location and cell cycle progression in G1 phase. May be involved in trafficking and/or processing of RNA. The protein is Serine/threonine-protein kinase Kist (UHMK1) of Pongo abelii (Sumatran orangutan).